The primary structure comprises 380 residues: Chaperone protein DnaJ (380 aa).

Residues 4 to 69 enclose the J domain; the sequence is DYYEILGVTR…QKRAAYDRFG (66 aa). The segment at 135–213 adopts a CR-type zinc-finger fold; the sequence is GKTAQINIPS…CQGTRRVEKN (79 aa). Zn(2+) is bound by residues Cys148, Cys151, Cys165, Cys168, Cys187, Cys190, Cys201, and Cys204. 4 CXXCXGXG motif repeats span residues 148-155, 165-172, 187-194, and 201-208; these read CDSCEGSG, CGTCHGAG, CHACNGRG, and CPKCQGTR.

It belongs to the DnaJ family. As to quaternary structure, homodimer. Requires Zn(2+) as cofactor.

The protein localises to the cytoplasm. Functionally, participates actively in the response to hyperosmotic and heat shock by preventing the aggregation of stress-denatured proteins and by disaggregating proteins, also in an autonomous, DnaK-independent fashion. Unfolded proteins bind initially to DnaJ; upon interaction with the DnaJ-bound protein, DnaK hydrolyzes its bound ATP, resulting in the formation of a stable complex. GrpE releases ADP from DnaK; ATP binding to DnaK triggers the release of the substrate protein, thus completing the reaction cycle. Several rounds of ATP-dependent interactions between DnaJ, DnaK and GrpE are required for fully efficient folding. Also involved, together with DnaK and GrpE, in the DNA replication of plasmids through activation of initiation proteins. This chain is Chaperone protein DnaJ, found in Bartonella quintana (strain Toulouse) (Rochalimaea quintana).